We begin with the raw amino-acid sequence, 512 residues long: Cytochrome P450 monooxygenase gliC (512 aa).

Positions 1–19 are cleaved as a signal peptide; that stretch reads MAFTLTILVPCMVLALVAA. Asparagine 118, asparagine 421, and asparagine 434 each carry an N-linked (GlcNAc...) asparagine glycan. Cysteine 452 provides a ligand contact to heme.

The protein belongs to the cytochrome P450 family. Heme is required as a cofactor.

It functions in the pathway mycotoxin biosynthesis. Functionally, cytochrome P450 monooxygenase; part of the gene cluster that mediates the biosynthesis of gliotoxin, a member of the epipolythiodioxopiperazine (ETP) class of toxins characterized by a disulfide bridged cyclic dipeptide. The first step in gliotoxin biosynthesis is the condensation of serine and phenylalanine to form the cyclo-L-phenylalanyl-L-serine diketopiperazine (DKP) by the NRPS gliP. GliP is also able to produce the DKP cyclo-L-tryptophanyl-L-serine, suggesting that the substrate specificity of the first adenylation (A) domain in gliP is sufficiently relaxed to accommodate both L-Phe and L-Trp. The cytochrome P450 monooxygenase gliC has been shown to catalyze the subsequent hydroxylation of the alpha-carbon of L-Phe in cyclo-L-phenylalanyl-L-serine whereas the second cytochrome P450 enzyme, gliF, is presumably involved in the modification of the DKP side chain. The glutathione S-transferase (GST) gliG then forms a bis-glutathionylated biosynthetic intermediate which is responsible for the sulfurization of gliotoxin. This bis-glutathionylated intermediate is subsequently processed by the gamma-glutamyl cyclotransferase gliK to remove both gamma-glutamyl moieties. Subsequent processing via gliI yields a biosynthetic intermediate, which is N-methylated via the N-methyltransferase gliN, before the gliotoxin oxidoreductase gliT-mediated disulfide bridge closure. GliN-mediated amide methylation confers stability to ETP, damping the spontaneous formation of tri- and tetrasulfides. Intracellular dithiol gliotoxin oxidized by gliT is subsequently effluxed by gliA. Gliotoxin contributes to pathogenesis during invasive aspergillosis. In macrophages and neutrophils, gliotoxin showed inhibition of various different cell functions including cytokine production, antigen presentation, phagocytosis, and production of reactive oxygen species. This is Cytochrome P450 monooxygenase gliC from Aspergillus fumigatus (strain ATCC MYA-4609 / CBS 101355 / FGSC A1100 / Af293) (Neosartorya fumigata).